The primary structure comprises 105 residues: UPF0235 protein RT0827 (105 aa).

It belongs to the UPF0235 family.

This is UPF0235 protein RT0827 from Rickettsia typhi (strain ATCC VR-144 / Wilmington).